Here is a 1348-residue protein sequence, read N- to C-terminus: ABC multidrug transporter atrD (1348 aa).

Residues Met-1–Ser-10 are compositionally biased toward polar residues. The interval Met-1–Asn-67 is disordered. Positions Glu-20–Pro-31 are enriched in low complexity. The N-linked (GlcNAc...) asparagine glycan is linked to Asn-99. 4 helical membrane-spanning segments follow: residues Ile-114–Phe-134, Tyr-168–Ile-188, Lys-240–Val-260, and Ile-268–Ile-288. An ABC transmembrane type-1 1 domain is found at Val-118–Asn-408. The N-linked (GlcNAc...) asparagine glycan is linked to Asn-314. The next 2 membrane-spanning stretches (helical) occupy residues Ile-344 to Gly-364 and Phe-371 to Ile-391. The ABC transporter 1 domain occupies Ile-443–Ala-688. Gly-478–Ser-485 is a binding site for ATP. N-linked (GlcNAc...) asparagine glycosylation occurs at Asn-550. A run of 2 helical transmembrane segments spans residues Met-778–Leu-798 and Leu-825–Phe-845. The region spanning Leu-779 to Lys-1068 is the ABC transmembrane type-1 2 domain. Asn-877 carries an N-linked (GlcNAc...) asparagine glycan. The next 4 membrane-spanning stretches (helical) occupy residues His-892–Gly-912, Leu-925–Leu-947, Ala-1015–His-1035, and Phe-1042–Phe-1062. N-linked (GlcNAc...) asparagine glycosylation is present at Asn-1088. Positions Ile-1103 to Leu-1341 constitute an ABC transporter 2 domain. Gly-1138–Ser-1145 is an ATP binding site.

This sequence belongs to the ABC transporter superfamily. ABCB family. Multidrug resistance exporter (TC 3.A.1.201) subfamily.

The protein localises to the cell membrane. Fenamirol efflux transporter activity is inhibited by the cyclosporin derivative PSC 833, nigericin, reserpine and valinomycin. The effect of reserpine is transiant, while that of the cyclosporin derivative PSC 833, nigericin and valinomycin is proportional to the time of exposure. Cyclohexinmide has inhibitory effect only when applied prior to addition of the fungicide. In terms of biological role, pleiotropic ABC efflux transporter involved in the protection of the cells against a wide range of toxic compounds. Confers resistance to the azole fenarimol via efflux transport. May also be involved in the secretion of penicillin. The chain is ABC multidrug transporter atrD from Emericella nidulans (Aspergillus nidulans).